A 545-amino-acid chain; its full sequence is Glucose-6-phosphate isomerase (545 aa).

The active-site Proton donor is the Glu-351. Catalysis depends on residues His-382 and Lys-510.

The protein belongs to the GPI family.

Its subcellular location is the cytoplasm. It catalyses the reaction alpha-D-glucose 6-phosphate = beta-D-fructose 6-phosphate. Its pathway is carbohydrate biosynthesis; gluconeogenesis. The protein operates within carbohydrate degradation; glycolysis; D-glyceraldehyde 3-phosphate and glycerone phosphate from D-glucose: step 2/4. Its function is as follows. Catalyzes the reversible isomerization of glucose-6-phosphate to fructose-6-phosphate. The protein is Glucose-6-phosphate isomerase of Shewanella putrefaciens (strain CN-32 / ATCC BAA-453).